Reading from the N-terminus, the 111-residue chain is Probable 4-amino-4-deoxy-L-arabinose-phosphoundecaprenol flippase subunit ArnE (111 aa).

Over 1–35 (MIWLTLVFASLLSVAGQLCQKQATCFATVNKRRKH) the chain is Cytoplasmic. A helical transmembrane segment spans residues 36 to 56 (IVLWLGLALACLGLAMVLWLL). The 70-residue stretch at 40–109 (LGLALACLGL…IIGGIVILGS (70 aa)) folds into the EamA domain. At 57–60 (VLQN) the chain is on the periplasmic side. Residues 61-81 (VPVGIAYPMLSLNFVWVTLAA) form a helical membrane-spanning segment. The Cytoplasmic portion of the chain corresponds to 82 to 87 (VKLWHE). A helical transmembrane segment spans residues 88–108 (PVSLRHWCGVAFIIGGIVILG). The Periplasmic segment spans residues 109-111 (STV).

This sequence belongs to the ArnE family. In terms of assembly, heterodimer of ArnE and ArnF.

It localises to the cell inner membrane. The protein operates within bacterial outer membrane biogenesis; lipopolysaccharide biosynthesis. In terms of biological role, translocates 4-amino-4-deoxy-L-arabinose-phosphoundecaprenol (alpha-L-Ara4N-phosphoundecaprenol) from the cytoplasmic to the periplasmic side of the inner membrane. The protein is Probable 4-amino-4-deoxy-L-arabinose-phosphoundecaprenol flippase subunit ArnE of Escherichia coli O6:H1 (strain CFT073 / ATCC 700928 / UPEC).